A 215-amino-acid chain; its full sequence is Cytochrome b6 (215 aa).

Residues 32 to 52 traverse the membrane as a helical segment; that stretch reads IFYCLGGITLTCFLVQVATGF. Residue Cys35 coordinates heme c. Positions 86 and 100 each coordinate heme b. 3 consecutive transmembrane segments (helical) span residues 90–110, 116–136, and 186–206; these read ASMM…TGGF, LTWV…VTGY, and LHTF…FLMI. His187 and His202 together coordinate heme b.

Belongs to the cytochrome b family. PetB subfamily. As to quaternary structure, the 4 large subunits of the cytochrome b6-f complex are cytochrome b6, subunit IV (17 kDa polypeptide, PetD), cytochrome f and the Rieske protein, while the 4 small subunits are PetG, PetL, PetM and PetN. The complex functions as a dimer. Heme b serves as cofactor. Requires heme c as cofactor.

The protein localises to the plastid. Its subcellular location is the chloroplast thylakoid membrane. Functionally, component of the cytochrome b6-f complex, which mediates electron transfer between photosystem II (PSII) and photosystem I (PSI), cyclic electron flow around PSI, and state transitions. The chain is Cytochrome b6 from Pelargonium hortorum (Common geranium).